The primary structure comprises 169 residues: Peptide methionine sulfoxide reductase MsrA (169 aa).

Cys-10 is a catalytic residue.

This sequence belongs to the MsrA Met sulfoxide reductase family.

The enzyme catalyses L-methionyl-[protein] + [thioredoxin]-disulfide + H2O = L-methionyl-(S)-S-oxide-[protein] + [thioredoxin]-dithiol. It carries out the reaction [thioredoxin]-disulfide + L-methionine + H2O = L-methionine (S)-S-oxide + [thioredoxin]-dithiol. Has an important function as a repair enzyme for proteins that have been inactivated by oxidation. Catalyzes the reversible oxidation-reduction of methionine sulfoxide in proteins to methionine. This is Peptide methionine sulfoxide reductase MsrA from Streptococcus equi subsp. equi (strain 4047).